The chain runs to 298 residues: Small ribosomal subunit protein uS3m (298 aa).

This sequence belongs to the universal ribosomal protein uS3 family.

Its subcellular location is the mitochondrion. The polypeptide is Small ribosomal subunit protein uS3m (RPS3) (Acanthamoeba castellanii (Amoeba)).